The following is a 240-amino-acid chain: Ribosomal RNA small subunit methyltransferase G (240 aa).

S-adenosyl-L-methionine-binding positions include G80, F85, 103–105 (DSS), 131–132 (AE), and R150.

The protein belongs to the methyltransferase superfamily. RNA methyltransferase RsmG family.

It localises to the cytoplasm. Specifically methylates the N7 position of a guanine in 16S rRNA. The polypeptide is Ribosomal RNA small subunit methyltransferase G (Thermoanaerobacter sp. (strain X514)).